Consider the following 183-residue polypeptide: Holliday junction branch migration complex subunit RuvA (183 aa).

Residues 1 to 64 are domain I; the sequence is MIVAIEGIVS…EDSHKLYGFL (64 aa). The interval 65–138 is domain II; the sequence is DTNEQRMFEL…SDAKINIENS (74 aa). S138 is a region of interest (flexible linker). Residues 138-183 are domain III; it reads SNQDHAQALAALLSLGFKQENILKVLRTCESQNTSELIKEALKKLA.

This sequence belongs to the RuvA family. As to quaternary structure, homotetramer. Forms an RuvA(8)-RuvB(12)-Holliday junction (HJ) complex. HJ DNA is sandwiched between 2 RuvA tetramers; dsDNA enters through RuvA and exits via RuvB. An RuvB hexamer assembles on each DNA strand where it exits the tetramer. Each RuvB hexamer is contacted by two RuvA subunits (via domain III) on 2 adjacent RuvB subunits; this complex drives branch migration. In the full resolvosome a probable DNA-RuvA(4)-RuvB(12)-RuvC(2) complex forms which resolves the HJ.

It is found in the cytoplasm. The RuvA-RuvB-RuvC complex processes Holliday junction (HJ) DNA during genetic recombination and DNA repair, while the RuvA-RuvB complex plays an important role in the rescue of blocked DNA replication forks via replication fork reversal (RFR). RuvA specifically binds to HJ cruciform DNA, conferring on it an open structure. The RuvB hexamer acts as an ATP-dependent pump, pulling dsDNA into and through the RuvAB complex. HJ branch migration allows RuvC to scan DNA until it finds its consensus sequence, where it cleaves and resolves the cruciform DNA. The protein is Holliday junction branch migration complex subunit RuvA of Campylobacter lari (strain RM2100 / D67 / ATCC BAA-1060).